The following is a 48-amino-acid chain: uncharacterized protein (48 aa).

The tract at residues 1–48 is disordered; that stretch reads MTKIPINIPATSGKIKFGITPSSNKSPSLSPSPSNGQLGGGRGYILEP. The segment covering 21–36 has biased composition (low complexity); it reads PSSNKSPSLSPSPSNG. The segment covering 37–48 has biased composition (gly residues); it reads QLGGGRGYILEP.

This is an uncharacterized protein from Dictyostelium discoideum (Social amoeba).